A 373-amino-acid polypeptide reads, in one-letter code: MGYVAIKGGGRAIAGAEAAVEALRCAEGPAGTPLTLSAIEQQLRLLTSRVVSEGGLYHPRLAALAIKQMQGDTLEAAFALRAYRSTKPRLMDVPVQDTSRMRLIRRISSAFKDIPGGQMLGPTTDYALRLMRLDLANESPEDFRAVSRRFLDSVADTDLPDSFPKVVDALRDEGLLPPLTRRAHAAFDITRDPLVFPVPRSAALATMARAETGSLLAIAYSNMRGYGDVHPTIAELRVGYVPVMLPHPVTGEPIEAGEVLMTECEVVAMFEGDATDGPPTFTLGYGACFGHNEVKAIAMAILDRALQKGMRDGPSNPSEDPEFVLLHVDGVDSMGFASHYKMPHYVTFQSDMDRLRTTQDKATAQPTQEGAPS.

The protein belongs to the PhnI family.

Its function is as follows. Belongs to an operon involved in hypophosphite oxidation. Exact function not known. In Stutzerimonas stutzeri (Pseudomonas stutzeri), this protein is Putative C-P lyase subunit protein HtxH (htxH).